The primary structure comprises 540 residues: Threonine--tRNA ligase catalytic subunit (540 aa).

A catalytic region spans residues 134–428; that stretch reads DHRIIGERLD…LLEHFRGKLP (295 aa). The Zn(2+) site is built by Cys-226, His-277, and His-405.

Belongs to the class-II aminoacyl-tRNA synthetase family. Homodimer. Probably interacts with its editing subunit. Requires Zn(2+) as cofactor.

It is found in the cytoplasm. The enzyme catalyses tRNA(Thr) + L-threonine + ATP = L-threonyl-tRNA(Thr) + AMP + diphosphate + H(+). Its function is as follows. Catalyzes the attachment of threonine to tRNA(Thr) in a two-step reaction: L-threonine is first activated by ATP to form Thr-AMP and then transferred to the acceptor end of tRNA(Thr). Also activates L-serine and transfers it to tRNA(Thr) but cannot deacylate incorrectly charged amino acid; unlike most archaea the editing function is found in a freestanding protein. This is Threonine--tRNA ligase catalytic subunit from Sulfurisphaera tokodaii (strain DSM 16993 / JCM 10545 / NBRC 100140 / 7) (Sulfolobus tokodaii).